We begin with the raw amino-acid sequence, 845 residues long: Protein arginine N-methyltransferase 9 (845 aa).

3 TPR repeats span residues 25-58 (VSRS…APEL), 67-100 (QYTL…FPDD), and 101-134 (EVIC…NPDF). SAM-dependent MTase PRMT-type domains are found at residues 137-466 (AKEN…YLRI) and 530-845 (NIPY…TVKQ).

This sequence belongs to the class I-like SAM-binding methyltransferase superfamily. Protein arginine N-methyltransferase family. In terms of assembly, found in a complex with PRMT9, SF3B2 and SF3B4. Interacts with SF3B2.

The protein resides in the cytoplasm. The catalysed reaction is L-arginyl-[protein] + 2 S-adenosyl-L-methionine = N(omega),N(omega)'-dimethyl-L-arginyl-[protein] + 2 S-adenosyl-L-homocysteine + 2 H(+). In terms of biological role, arginine methyltransferase that can both catalyze the formation of omega-N monomethylarginine (MMA) and symmetrical dimethylarginine (sDMA). Specifically mediates the symmetrical dimethylation of SF3B2. Involved in the regulation of alternative splicing of pre-mRNA. The polypeptide is Protein arginine N-methyltransferase 9 (Homo sapiens (Human)).